Reading from the N-terminus, the 552-residue chain is Protein FAM234A (552 aa).

Residues 1 to 48 (MTDGKDLEAEIHPLKSENRKVPENAGALAGKEPRGTPAPQTRLSHCRT) are Cytoplasmic-facing. The helical; Signal-anchor for type II membrane protein transmembrane segment at 49–69 (AAFFLSLFACLLVVFVVSFII) threads the bilayer. The Extracellular portion of the chain corresponds to 70 to 552 (PCPDRPALQG…LSRLRYRSEA (483 aa)). Residues asparagine 115, asparagine 238, and asparagine 473 are each glycosylated (N-linked (GlcNAc...) asparagine).

Belongs to the FAM234 family.

The protein localises to the membrane. The protein is Protein FAM234A (FAM234A) of Bos taurus (Bovine).